The sequence spans 401 residues: DNA damage checkpoint control protein RAD17 (401 aa).

Residues 367–393 are disordered; the sequence is KKIKLPSEEENNKNRESEDEENHCKYP. Basic and acidic residues predominate over residues 371 to 393; that stretch reads LPSEEENNKNRESEDEENHCKYP. Serine 383 bears the Phosphoserine mark.

The protein belongs to the rad1 family. Component of the checkpoint clamp complex composed of DDC1, MEC3 and RAD17. The interaction with MEC3 is performed in a RAD17-dependent manner. The checkpoint clamp complex loads onto DNA. Interacts with the DNA polymerase zeta subunit REV7. 2 RAD17 subunits also form a heterotrimer with one MEC3 subunit.

It localises to the nucleus. Component of the checkpoint clamp complex involved in the surveillance mechanism that allows the DNA repair pathways to act to restore the integrity of the DNA prior to DNA synthesis or separation of the replicated chromosomes. Associates with sites of DNA damage and modulates the MEC1 signaling pathway and the activation of RAD53 in response to DNA damage at phase G1. The complex also physically regulates DNA polymerase zeta-dependent mutagenesis by controlling the access of polymerase zeta to damaged DNA. Contrary to its human counterpart, the 9-1-1 complex, the checkpoint clamp complex shows no detectable exonuclease activity. The protein is DNA damage checkpoint control protein RAD17 (RAD17) of Saccharomyces cerevisiae (strain ATCC 204508 / S288c) (Baker's yeast).